The primary structure comprises 460 residues: 3-isopropylmalate dehydratase large subunit (460 aa).

Cys338, Cys398, and Cys401 together coordinate [4Fe-4S] cluster.

The protein belongs to the aconitase/IPM isomerase family. LeuC type 1 subfamily. As to quaternary structure, heterodimer of LeuC and LeuD. [4Fe-4S] cluster serves as cofactor.

The catalysed reaction is (2R,3S)-3-isopropylmalate = (2S)-2-isopropylmalate. It functions in the pathway amino-acid biosynthesis; L-leucine biosynthesis; L-leucine from 3-methyl-2-oxobutanoate: step 2/4. Functionally, catalyzes the isomerization between 2-isopropylmalate and 3-isopropylmalate, via the formation of 2-isopropylmaleate. In Streptococcus thermophilus (strain CNRZ 1066), this protein is 3-isopropylmalate dehydratase large subunit.